The following is a 768-amino-acid chain: Translation initiation factor IF-2, chloroplastic (768 aa).

Disordered regions lie at residues methionine 1–asparagine 20, lysine 54–serine 77, and lysine 155–serine 176. The segment covering lysine 54–leucine 65 has biased composition (basic and acidic residues). Residues threonine 160 to serine 176 show a composition bias toward polar residues. Positions lysine 261–lysine 434 constitute a tr-type G domain. GTP-binding positions include glycine 270 to threonine 277, aspartate 320 to histidine 324, and serine 374 to aspartate 377.

Belongs to the TRAFAC class translation factor GTPase superfamily. Classic translation factor GTPase family. IF-2 subfamily.

Its subcellular location is the plastid. It is found in the chloroplast. In terms of biological role, one of the essential components for the initiation of protein synthesis. Protects formylmethionyl-tRNA from spontaneous hydrolysis and promotes its binding to the 30S ribosomal subunits. Also involved in the hydrolysis of GTP during the formation of the 70S ribosomal complex. In Pyropia yezoensis (Susabi-nori), this protein is Translation initiation factor IF-2, chloroplastic (infB).